We begin with the raw amino-acid sequence, 58 residues long: Large ribosomal subunit protein eL37 (58 aa).

A compositionally biased stretch (polar residues) spans methionine 1–histidine 17. Positions methionine 1–lysine 26 are disordered. Cysteine 20, cysteine 23, cysteine 35, and cysteine 38 together coordinate Zn(2+). Residues cysteine 20–cysteine 38 form a C4-type zinc finger.

This sequence belongs to the eukaryotic ribosomal protein eL37 family. It depends on Zn(2+) as a cofactor.

Functionally, binds to the 23S rRNA. The sequence is that of Large ribosomal subunit protein eL37 from Halobacterium salinarum (strain ATCC 29341 / DSM 671 / R1).